A 421-amino-acid polypeptide reads, in one-letter code: CinA-like protein (421 aa).

The protein belongs to the CinA family.

This is CinA-like protein from Synechococcus sp. (strain ATCC 27144 / PCC 6301 / SAUG 1402/1) (Anacystis nidulans).